The sequence spans 491 residues: Trigger factor (491 aa).

Residues 169-254 (GDRVTIDYLG…VKDVAAAAPI (86 aa)) form the PPIase FKBP-type domain. Residues 433-491 (KTVSKDELMAEDEAEDKPAKKAPAKKKAAAKAEAGEGEEAAAPKKKAPAKKKAADDSAE) are disordered. The span at 452–461 (KKAPAKKKAA) shows a compositional bias: basic residues.

This sequence belongs to the FKBP-type PPIase family. Tig subfamily.

Its subcellular location is the cytoplasm. It carries out the reaction [protein]-peptidylproline (omega=180) = [protein]-peptidylproline (omega=0). Its function is as follows. Involved in protein export. Acts as a chaperone by maintaining the newly synthesized protein in an open conformation. Functions as a peptidyl-prolyl cis-trans isomerase. The chain is Trigger factor from Sinorhizobium fredii (strain NBRC 101917 / NGR234).